A 524-amino-acid polypeptide reads, in one-letter code: Ribonuclease Y (524 aa).

The chain crosses the membrane as a helical span at residues Ile-3 to Phe-23. Residues Ala-214 to Leu-274 enclose the KH domain. An HD domain is found at Leu-340–Ala-432.

The protein belongs to the RNase Y family.

The protein resides in the cell membrane. Functionally, endoribonuclease that initiates mRNA decay. This chain is Ribonuclease Y, found in Chlorobium luteolum (strain DSM 273 / BCRC 81028 / 2530) (Pelodictyon luteolum).